The primary structure comprises 769 residues: Protein transport protein sec39 (769 aa).

Belongs to the SEC39 family. In terms of assembly, component of a peripheral membrane protein complex consisting of dsl1, sec39 and tip20.

Its subcellular location is the endoplasmic reticulum membrane. In terms of biological role, required for protein transport between the Golgi and the endoplasmic reticulum. May contribute to tethering of coatomer-coated retrograde transport vesicles to the ER membrane through interaction with and stabilization of the SNARE complex. This is Protein transport protein sec39 from Schizosaccharomyces pombe (strain 972 / ATCC 24843) (Fission yeast).